The primary structure comprises 852 residues: MTSIQERGTSAHLHSLKEGEASDRSSEMLPKQRSIIGSHVQRPPSQTTLGRSRAGSNTMNKVSGLDIARRPSENLLSNMNCSDNGNGGNMLNSFVNSALPPPKVNPAQTRRERPASNSSIGTKTTEVFSSTSASSSLGDTSDEGEGSDADKSKINTFPSILMEKATQGRGANGNGMRSASNNTIVEATTDGSKMALQKSMSFDDTAAEKTMNKSRHSYQEQFSSKKSQSSLLNSKQRSRAKSQTCSSTGYNNSSILKTFGISSKISNSSDRIEASSLEFNVPSQKPLNCKPLTPSQKYRLRKEQSEMNLRNTIKRKEKFYDSQEQILELQEGDVDDSLIWNVPMASLSTNSFLASAKPDDMNNLAGKNDLSEYTGGLVNDNSEISYTKQNHRYSNISFASTTSNASLLDFNEMPTSPIPGLNKVTDFQFIQDTTKSLASVYLHSSNRLSRSKLSERTKSSDFLPIELKEAQNQGMEDLILVSENKLDVVSHSRPSWLPPKDRQEKKLHERQINKSMSVASLDQLGKNKDREEKLIRDETNRQKYVLLLDRDITRNSSLQSLSKMVWDTPFSDETRSTIYSEILQSKTRFITKNYIQPFHELQELLTKMGDFPKNKEIEISQLIETSLRRKVSGLHDICPDLMLLLKIKSISSQGIVTGDELLFHHFLVSESFQNLGLNEIWNIVNLVQMTCFNDLCKEKFDAKVLERKGVVAGYLSQNEEFKDEFNTECINSTTWWNILERIDHKLFMWIMDIIVVNNSQSYKNSPINEDEFVNKDWEYYRSKKVVINYKILISFALNVLLNYHFGFTDLRSLCNVNDQRFCIPVFINDEFVDADTVNAVFIKKWAHYYKKF.

The interval 1 to 158 is disordered; the sequence is MTSIQERGTS…ADKSKINTFP (158 aa). The segment covering 15–26 has biased composition (basic and acidic residues); it reads SLKEGEASDRSS. Residues 43-61 are compositionally biased toward polar residues; sequence PPSQTTLGRSRAGSNTMNK. Phosphoserine is present on Ser-72. The segment covering 74–96 has biased composition (polar residues); it reads NLLSNMNCSDNGNGGNMLNSFVN. Residues 124–139 are compositionally biased toward low complexity; the sequence is TTEVFSSTSASSSLGD. Position 201 is a phosphoserine (Ser-201). The disordered stretch occupies residues 206–248; it reads AAEKTMNKSRHSYQEQFSSKKSQSSLLNSKQRSRAKSQTCSST. A compositionally biased stretch (low complexity) spans 224–235; sequence SKKSQSSLLNSK. Ser-459, Ser-517, and Ser-520 each carry phosphoserine.

Belongs to the SBE2 family.

Its subcellular location is the cytoplasm. It localises to the golgi apparatus. Its function is as follows. With SBE2, is involved in cell wall integrity and polarity processes like bud growth, through the transport of CHS3 and UTR2 to sites of growth. The polypeptide is Protein SBE22 (SBE22) (Saccharomyces cerevisiae (strain YJM789) (Baker's yeast)).